A 444-amino-acid polypeptide reads, in one-letter code: Glutamyl-tRNA reductase (444 aa).

Residues 49–52 (TCNR), serine 109, 114–116 (ETQ), and glutamine 120 each bind substrate. Catalysis depends on cysteine 50, which acts as the Nucleophile. 189–194 (GAGKMG) contributes to the NADP(+) binding site.

The protein belongs to the glutamyl-tRNA reductase family. As to quaternary structure, homodimer.

The enzyme catalyses (S)-4-amino-5-oxopentanoate + tRNA(Glu) + NADP(+) = L-glutamyl-tRNA(Glu) + NADPH + H(+). Its pathway is porphyrin-containing compound metabolism; protoporphyrin-IX biosynthesis; 5-aminolevulinate from L-glutamyl-tRNA(Glu): step 1/2. In terms of biological role, catalyzes the NADPH-dependent reduction of glutamyl-tRNA(Glu) to glutamate 1-semialdehyde (GSA). This chain is Glutamyl-tRNA reductase, found in Bacillus cereus (strain 03BB102).